Consider the following 298-residue polypeptide: 4-diphosphocytidyl-2-C-methyl-D-erythritol kinase (298 aa).

Lys-25 is a catalytic residue. Position 109–119 (109–119) interacts with ATP; sequence PVGGGFGGGSS. The active site involves Asp-151.

This sequence belongs to the GHMP kinase family. IspE subfamily.

It carries out the reaction 4-CDP-2-C-methyl-D-erythritol + ATP = 4-CDP-2-C-methyl-D-erythritol 2-phosphate + ADP + H(+). The protein operates within isoprenoid biosynthesis; isopentenyl diphosphate biosynthesis via DXP pathway; isopentenyl diphosphate from 1-deoxy-D-xylulose 5-phosphate: step 3/6. Functionally, catalyzes the phosphorylation of the position 2 hydroxy group of 4-diphosphocytidyl-2C-methyl-D-erythritol. This Xylella fastidiosa (strain 9a5c) protein is 4-diphosphocytidyl-2-C-methyl-D-erythritol kinase.